A 92-amino-acid polypeptide reads, in one-letter code: Small ribosomal subunit protein uS19 (92 aa).

It belongs to the universal ribosomal protein uS19 family.

Protein S19 forms a complex with S13 that binds strongly to the 16S ribosomal RNA. This Mesorhizobium japonicum (strain LMG 29417 / CECT 9101 / MAFF 303099) (Mesorhizobium loti (strain MAFF 303099)) protein is Small ribosomal subunit protein uS19.